A 518-amino-acid polypeptide reads, in one-letter code: Glutamate--cysteine ligase (518 aa).

This sequence belongs to the glutamate--cysteine ligase type 1 family. Type 1 subfamily.

It catalyses the reaction L-cysteine + L-glutamate + ATP = gamma-L-glutamyl-L-cysteine + ADP + phosphate + H(+). Its pathway is sulfur metabolism; glutathione biosynthesis; glutathione from L-cysteine and L-glutamate: step 1/2. The sequence is that of Glutamate--cysteine ligase from Salmonella paratyphi C (strain RKS4594).